Consider the following 315-residue polypeptide: N-acetylneuraminate lyase (315 aa).

Residues S59 and S60 each coordinate aceneuramate. The active-site Proton donor is Y149. K177 acts as the Schiff-base intermediate with substrate in catalysis. Residues S179, G202, D204, E205, and G221 each contribute to the aceneuramate site.

It belongs to the DapA family. NanA subfamily. Homotetramer.

It is found in the cytoplasm. The enzyme catalyses aceneuramate = aldehydo-N-acetyl-D-mannosamine + pyruvate. Its pathway is amino-sugar metabolism; N-acetylneuraminate degradation; D-fructose 6-phosphate from N-acetylneuraminate: step 1/5. Functionally, catalyzes the reversible aldol cleavage of N-acetylneuraminic acid (sialic acid; Neu5Ac) to form pyruvate and N-acetylmannosamine (ManNAc) via a Schiff base intermediate. Cannot use 2,7-anhydro-Neu5Ac. Involved in the degradation of sialic acid, which is present in the host mucus layer and represents a much-coveted source of nutrients for R.gnavus, a prevalent member of the normal gut microbiota. This is N-acetylneuraminate lyase from Mediterraneibacter gnavus (strain ATCC 29149 / DSM 114966 / JCM 6515 / VPI C7-9) (Ruminococcus gnavus).